The following is a 351-amino-acid chain: MTLRLLEDWCRGMDMNPRKALLIAGISQSCSVAEIEEALQAGLAPLGEYRLLGRMFRRDENRKVALVGLTAETSHALVPKEIPGKGGIWRVIFKPPDSDNTFLSRLNEFLAGEGMTVGELTRALAHENGSLDLEQGMIPEMWAPMLAQALEALQPALQCLKYKKLRVFSGREPPEPGEEEFGRWMFHTTQMIKAWQVPDVEKRRRLLESLRGPALDVIRVLKINNPLITVDECLQALEEVFGVTDNPRELQVKYLTTYQKDEEKLSAYVLRLEPLLQKLVQRGAIERDAVNQARLDQVIAGAVHKTIRRELNLPEDGPAPGFLQLLVLIKDYEAAEEEEALLQEVLEGHFT.

An LIR motif is present at residues 49 to 52 (YRLL). The BH3-like stretch occupies residues 120–127 (LTRALAHE). The RASSF1-binding stretch occupies residues 202 to 205 (KRRR).

It belongs to the PNMA family. As to quaternary structure, homodimer. Under normal circumstances, held in an inactive conformation by an intramolecular interaction. Interacts with BAX. Binding to RASSF1 isoform A (RASSF1A) relieves this inhibitory interaction and allows further binding to BAX. Also binds to BCL2 and BCLX. Recruited to the TNFRSF1A and TNFRSF10A complexes in response to their respective cognate ligand, after internalization. Interacts with TRIM39. Interacts with RASSF6. Interacts with ATG8 proteins MAP1LC3A, MAP1LC3B and MAP1LC3C. Does not interact with ATG8 proteins GABARAPL1, GABARAPL2 and GABARAP. Interacts with SQSTM1; promoting dissociation of SQSTM1 inclusion bodies that sequester KEAP1. Ubiquitinated and degraded during mitotic exit by APC/C-Cdh1, this modification is inhibited by TRIM39.

It localises to the cytoplasm. Its subcellular location is the cytosol. The protein resides in the mitochondrion outer membrane. The protein localises to the extracellular vesicle membrane. Its function is as follows. Retrotransposon-derived protein that forms virion-like capsids. Acts as an effector of BAX during apoptosis: enriched at outer mitochondria membrane and associates with BAX upon induction of apoptosis, facilitating BAX-dependent mitochondrial outer membrane permeabilization and apoptosis. Required for death receptor-dependent apoptosis. When associated with RASSF1, promotes BAX conformational change and translocation to mitochondrial membranes in response to TNF and TNFSF10 stimulation. Also promotes autophagy: promotes phagophore closure via association with ATG8 proteins. Acts as an inhibitor of the NFE2L2/NRF2 pathway via interaction with SQSTM1: interaction promotes dissociation of SQSTM1 inclusion bodies that sequester KEAP1, relieving inactivation of the BCR(KEAP1) complex. In Macaca fascicularis (Crab-eating macaque), this protein is Modulator of apoptosis 1.